The primary structure comprises 150 residues: D-aminoacyl-tRNA deacylase (150 aa).

Positions 138-139 (GP) match the Gly-cisPro motif, important for rejection of L-amino acids motif.

Belongs to the DTD family. Homodimer.

The protein resides in the cytoplasm. The enzyme catalyses glycyl-tRNA(Ala) + H2O = tRNA(Ala) + glycine + H(+). The catalysed reaction is a D-aminoacyl-tRNA + H2O = a tRNA + a D-alpha-amino acid + H(+). Functionally, an aminoacyl-tRNA editing enzyme that deacylates mischarged D-aminoacyl-tRNAs. Also deacylates mischarged glycyl-tRNA(Ala), protecting cells against glycine mischarging by AlaRS. Acts via tRNA-based rather than protein-based catalysis; rejects L-amino acids rather than detecting D-amino acids in the active site. By recycling D-aminoacyl-tRNA to D-amino acids and free tRNA molecules, this enzyme counteracts the toxicity associated with the formation of D-aminoacyl-tRNA entities in vivo and helps enforce protein L-homochirality. The sequence is that of D-aminoacyl-tRNA deacylase from Natranaerobius thermophilus (strain ATCC BAA-1301 / DSM 18059 / JW/NM-WN-LF).